The following is a 598-amino-acid chain: Nuclear receptor subfamily 4 group A member 2 (598 aa).

Residues 1–22 (MPCVQAQYGSSPQGASPASQSY) are disordered. Residues 8–22 (YGSSPQGASPASQSY) are compositionally biased toward low complexity. Residues 260 to 335 (EGLCAVCGDN…VGMVKEVVRT (76 aa)) constitute a DNA-binding region (nuclear receptor). 2 NR C4-type zinc fingers span residues 263–283 (CAVC…CEGC) and 299–323 (CLAN…FQKC). The short motif at 287-314 (FKRTVQKNAKYVCLANKNCPVDKRRRNR) is the Bipartite nuclear localization signal (NLS1) element. Residues 337–361 (SLKGRRGRLPSKPKSPQDPSPPSPP) form a disordered region. The Nuclear localization signal (NLS1) motif lies at 338 to 350 (LKGRRGRLPSKPK). Residues 352 to 361 (PQDPSPPSPP) show a composition bias toward pro residues. The NR LBD domain occupies 360-595 (PPVSLISALV…AIIDKLFLDT (236 aa)). The nuclear export sequence (NES1) signature appears at 443–452 (FLELFVLRLA). Positions 568–577 (QGLQRIFYLK) match the nuclear export sequence (NES2) motif.

This sequence belongs to the nuclear hormone receptor family. NR4 subfamily. Interacts with SFPQ, NCOR2, SIN3A and HADC1. The interaction with NCOR2 increases in the absence of PITX3. Interacts with PER2. As to expression, shows a ubiquitous distribution in the cerebral cortex, hippocampus, thalamus, amygdala, and midbrain. Expression increases in prenatally stressed adult offspring in the ventral tegmental area, whereas no changes are observed in the substantia nigra area (at protein level). Not expressed in quiescent liver but is rapidly induced following partial hepatectomy and is specific to hepatic growth as it is not induced in other mitogen-treated cells. Expressed at very low levels in the lung, spleen and stomach and at high levels in the brain.

It localises to the cytoplasm. The protein localises to the nucleus. In terms of biological role, transcriptional regulator which is important for the differentiation and maintenance of meso-diencephalic dopaminergic (mdDA) neurons during development. It is crucial for expression of a set of genes such as SLC6A3, SLC18A2, TH and DRD2 which are essential for development of mdDA neurons. May confer liver-specific regulation of delayed-early genes induced later in the G1 phase of regeneration along with NR4A1. The polypeptide is Nuclear receptor subfamily 4 group A member 2 (Nr4a2) (Rattus norvegicus (Rat)).